A 487-amino-acid chain; its full sequence is UL37 immediate early glycoprotein (487 aa).

The first 22 residues, 1 to 22 (MSPVYVNLLGSVGLLAFWYFSY), serve as a signal peptide directing secretion. Residues 83-107 (GEESVTEDTEREDTEEEREDEEEEN) are compositionally biased toward acidic residues. The interval 83-121 (GEESVTEDTEREDTEEEREDEEEENEARTPEVNPIDAEG) is disordered. N-linked (GlcNAc...) asparagine; by host glycosylation is found at asparagine 206, asparagine 210, asparagine 219, asparagine 223, asparagine 242, asparagine 246, asparagine 275, asparagine 281, asparagine 294, asparagine 297, asparagine 306, asparagine 333, asparagine 337, asparagine 343, asparagine 379, asparagine 384, and asparagine 391. Residues 433-459 (WALLSICTVAAGSIALLSLFCILLIGL) traverse the membrane as a helical segment.

The protein belongs to the immediate early glycoprotein family. Interacts with host BAX. Interacts with host RSAD2/viperin; this interaction results in RSAD2/viperin relocalization from the endoplasmic reticulum to the mitochondria, actin cytoskeleton disruption and enhancement of infection. Interacts with host PEX19; this interaction inhibits the peroxisomal-dependent antiviral signaling. Interacts with host CHCHD6; this interaction rewires mitochondria by engaging the conserved MICOS complex.

Its subcellular location is the host endoplasmic reticulum membrane. The protein resides in the host Golgi apparatus membrane. It is found in the host mitochondrion membrane. It localises to the host peroxisome. In terms of biological role, multifunctional transmembrane protein that plays several key roles in viral replication. Rapidely traffics from the host endoplasmic reticulum to the outer mitochondrial membrane where it acts to inhibit host immune response, block apoptotic signaling, regulate calcium flux, and induce mitochondrial fragmentation. Sequesters proapoptotic BAX at the outer mitochondrial membrane and prevents cytochrome c release and subsequent initiation of the proapoptotic cascade. Also provoques a calcium efflux from host endoplasmic reticulum and F-actin cytoskeleton disruption. Participates in the increase of host mitochondrial biogenesis, thus promoting viral replication by efficient use of newly made mitochondria. Additionally, a subset of vMIA localizes to peroxisomes, causing fragmentation and blocking peroxisomal MAVS signaling. Mechanistically, inhibits host MAVS oligomerization at peroxisomes in a mitochondrial fission factors (MFF)-dependent manner and in mitochondria independently of mitochondrial fission factors. Plays an essential role in the trafficking of host viperin/RSAD2 from the endoplasmic reticulum to the viral assembly compartment via the mitochondria during viral infection as failure of viperin to localize to the mitochondria results in insufficient lipogenesis and thus reduces viral replication. May play a role in escape from the host antiviral response. The chain is UL37 immediate early glycoprotein (UL37) from Human cytomegalovirus (strain AD169) (HHV-5).